A 343-amino-acid chain; its full sequence is MASAPRVSEVLTKKNLPPLSLYNFYIYIRDEENAIEFLDLFLDIMLHKFLFREHIRGLYKAGVTSTSLNTESSSTLGPHHFTRFRSASLSLEDLSTVYWPNFGPLLLEELSNEQTINSSDLLLSKDRAAYLKNLLTSNIQSLTQESTVISKEQVKMFTQIIIEKYFNPASPHEVMLPPQLVQPILDCKEHQRQDELRLFEDVETYLLNFLLKPAYYRFLNHKFKHNLNPLTCTGRFIIGYVSTFAAYWLGFCGIFLDYSRRKRVWTLLPFAFGFYNLICTWSKHDPVLALLGYSEVKPFHYEKVLQPSIRLSLNRRAIFVLSIIVLIVGANTAIFSCVPSIRL.

Residues 1-235 are Cytoplasmic-facing; sequence MASAPRVSEV…NLNPLTCTGR (235 aa). The RGS domain occupies 109-228; sequence ELSNEQTINS…LNHKFKHNLN (120 aa). Residues 236–256 traverse the membrane as a helical segment; sequence FIIGYVSTFAAYWLGFCGIFL. Over 257 to 263 the chain is Extracellular; that stretch reads DYSRRKR. The chain crosses the membrane as a helical span at residues 264–284; that stretch reads VWTLLPFAFGFYNLICTWSKH. The Cytoplasmic portion of the chain corresponds to 285-317; sequence DPVLALLGYSEVKPFHYEKVLQPSIRLSLNRRA. The chain crosses the membrane as a helical span at residues 318–338; that stretch reads IFVLSIIVLIVGANTAIFSCV. Residues 339 to 343 lie on the Extracellular side of the membrane; sequence PSIRL.

Its subcellular location is the cell membrane. It is found in the endoplasmic reticulum membrane. In terms of biological role, may be involved in cell polarization and division. The polypeptide is Protein rax1 (rax1) (Schizosaccharomyces pombe (strain 972 / ATCC 24843) (Fission yeast)).